The primary structure comprises 710 residues: Polyribonucleotide nucleotidyltransferase (710 aa).

Positions 488 and 494 each coordinate Mg(2+). The KH domain occupies Pro-555–Ile-614. One can recognise an S1 motif domain in the interval Gly-624–Lys-692.

Belongs to the polyribonucleotide nucleotidyltransferase family. It depends on Mg(2+) as a cofactor.

It is found in the cytoplasm. It carries out the reaction RNA(n+1) + phosphate = RNA(n) + a ribonucleoside 5'-diphosphate. Its function is as follows. Involved in mRNA degradation. Catalyzes the phosphorolysis of single-stranded polyribonucleotides processively in the 3'- to 5'-direction. This chain is Polyribonucleotide nucleotidyltransferase, found in Maricaulis maris (strain MCS10) (Caulobacter maris).